A 371-amino-acid polypeptide reads, in one-letter code: tRNA-specific 2-thiouridylase MnmA (371 aa).

Residues 12-19 (GMSGGVDS) and Met38 each bind ATP. Residues 98–100 (NPD) form an interaction with target base in tRNA region. The Nucleophile role is filled by Cys103. A disulfide bridge links Cys103 with Cys200. Residue Gly128 coordinates ATP. Positions 150-152 (KDQ) are interaction with tRNA. Cys200 serves as the catalytic Cysteine persulfide intermediate. The segment at 312–313 (RY) is interaction with tRNA.

The protein belongs to the MnmA/TRMU family. In terms of assembly, interacts with TusE.

Its subcellular location is the cytoplasm. It carries out the reaction S-sulfanyl-L-cysteinyl-[protein] + uridine(34) in tRNA + AH2 + ATP = 2-thiouridine(34) in tRNA + L-cysteinyl-[protein] + A + AMP + diphosphate + H(+). In terms of biological role, catalyzes the 2-thiolation of uridine at the wobble position (U34) of tRNA(Lys), tRNA(Glu) and tRNA(Gln), leading to the formation of s(2)U34, the first step of tRNA-mnm(5)s(2)U34 synthesis. Sulfur is provided by IscS, via a sulfur-relay system. Binds ATP and its substrate tRNAs. In Yersinia pestis bv. Antiqua (strain Antiqua), this protein is tRNA-specific 2-thiouridylase MnmA.